A 130-amino-acid polypeptide reads, in one-letter code: Holo-[acyl-carrier-protein] synthase (130 aa).

Mg(2+)-binding residues include Asp-8 and Glu-62.

The protein belongs to the P-Pant transferase superfamily. AcpS family. Mg(2+) serves as cofactor.

The protein localises to the cytoplasm. It catalyses the reaction apo-[ACP] + CoA = holo-[ACP] + adenosine 3',5'-bisphosphate + H(+). Functionally, transfers the 4'-phosphopantetheine moiety from coenzyme A to a Ser of acyl-carrier-protein. The chain is Holo-[acyl-carrier-protein] synthase from Herminiimonas arsenicoxydans.